The following is a 366-amino-acid chain: Ribosomal RNA large subunit methyltransferase M (366 aa).

S-adenosyl-L-methionine-binding positions include Ser187, 220 to 223 (SPGG), Asp239, Asp259, and Asp276. The active-site Proton acceptor is Lys305.

Belongs to the class I-like SAM-binding methyltransferase superfamily. RNA methyltransferase RlmE family. RlmM subfamily. As to quaternary structure, monomer.

Its subcellular location is the cytoplasm. The catalysed reaction is cytidine(2498) in 23S rRNA + S-adenosyl-L-methionine = 2'-O-methylcytidine(2498) in 23S rRNA + S-adenosyl-L-homocysteine + H(+). Its function is as follows. Catalyzes the 2'-O-methylation at nucleotide C2498 in 23S rRNA. The protein is Ribosomal RNA large subunit methyltransferase M of Tolumonas auensis (strain DSM 9187 / NBRC 110442 / TA 4).